We begin with the raw amino-acid sequence, 204 residues long: Holliday junction branch migration complex subunit RuvA (204 aa).

Residues 1–64 (MIGRLQGILL…EDAHLLFGFA (64 aa)) form a domain I region. Positions 65–143 (QKTDRTLFRE…GVKQSDFFVE (79 aa)) are domain II. The tract at residues 144-155 (STHIPLSPSIES) is flexible linker. The segment at 156–204 (HSESSSDEAISALIALGYKPAEAEKMVKRVAKPELTSEQVIREALKAAL) is domain III.

Belongs to the RuvA family. In terms of assembly, homotetramer. Forms an RuvA(8)-RuvB(12)-Holliday junction (HJ) complex. HJ DNA is sandwiched between 2 RuvA tetramers; dsDNA enters through RuvA and exits via RuvB. An RuvB hexamer assembles on each DNA strand where it exits the tetramer. Each RuvB hexamer is contacted by two RuvA subunits (via domain III) on 2 adjacent RuvB subunits; this complex drives branch migration. In the full resolvosome a probable DNA-RuvA(4)-RuvB(12)-RuvC(2) complex forms which resolves the HJ.

The protein resides in the cytoplasm. Functionally, the RuvA-RuvB-RuvC complex processes Holliday junction (HJ) DNA during genetic recombination and DNA repair, while the RuvA-RuvB complex plays an important role in the rescue of blocked DNA replication forks via replication fork reversal (RFR). RuvA specifically binds to HJ cruciform DNA, conferring on it an open structure. The RuvB hexamer acts as an ATP-dependent pump, pulling dsDNA into and through the RuvAB complex. HJ branch migration allows RuvC to scan DNA until it finds its consensus sequence, where it cleaves and resolves the cruciform DNA. The sequence is that of Holliday junction branch migration complex subunit RuvA from Haemophilus influenzae (strain PittGG).